The primary structure comprises 326 residues: Sucrose operon repressor (326 aa).

In terms of domain architecture, HTH lacI-type spans 1 to 57 (MKPKLNDVAKLAGVSATTVSRVINNHGYLSSQTKEKVFAAMRELHYQPNNMARSLQG). The segment at residues 5–24 (LNDVAKLAGVSATTVSRVIN) is a DNA-binding region (H-T-H motif).

In terms of biological role, negative regulator of scrB expression. This Pediococcus pentosaceus protein is Sucrose operon repressor (scrR).